We begin with the raw amino-acid sequence, 93 residues long: Putative regulatory protein Fnod_1678 (93 aa).

It belongs to the RemA family.

This chain is Putative regulatory protein Fnod_1678, found in Fervidobacterium nodosum (strain ATCC 35602 / DSM 5306 / Rt17-B1).